Consider the following 221-residue polypeptide: MQHKYDIATAMRLYFIAGSQDVTHFASDPADNLLSVLEQALQAGITCYQFREKGKRALQNPIAYKALAIACRNLCRKYKVPFVVNDDVALAVEIGADGIHVGQTDMPPHQVKRLCTGKCFVGTSVNTIEQGLIAQNDPNVDYFGVGPIFPTQSKEDAEPVLSPAFITQIRANHIDKPMVAIGGIKVKDVAMLMAKGANGVAVISAITQSNHIEKTVKELLR.

Residues 49–53 and asparagine 85 each bind 4-amino-2-methyl-5-(diphosphooxymethyl)pyrimidine; that span reads QFREK. Mg(2+) contacts are provided by aspartate 86 and aspartate 105. Residue serine 124 participates in 4-amino-2-methyl-5-(diphosphooxymethyl)pyrimidine binding. 151-153 contributes to the 2-[(2R,5Z)-2-carboxy-4-methylthiazol-5(2H)-ylidene]ethyl phosphate binding site; it reads TQS. Lysine 154 is a 4-amino-2-methyl-5-(diphosphooxymethyl)pyrimidine binding site. Residues glycine 183 and 203–204 contribute to the 2-[(2R,5Z)-2-carboxy-4-methylthiazol-5(2H)-ylidene]ethyl phosphate site; that span reads IS.

It belongs to the thiamine-phosphate synthase family. The cofactor is Mg(2+).

It carries out the reaction 2-[(2R,5Z)-2-carboxy-4-methylthiazol-5(2H)-ylidene]ethyl phosphate + 4-amino-2-methyl-5-(diphosphooxymethyl)pyrimidine + 2 H(+) = thiamine phosphate + CO2 + diphosphate. The enzyme catalyses 2-(2-carboxy-4-methylthiazol-5-yl)ethyl phosphate + 4-amino-2-methyl-5-(diphosphooxymethyl)pyrimidine + 2 H(+) = thiamine phosphate + CO2 + diphosphate. It catalyses the reaction 4-methyl-5-(2-phosphooxyethyl)-thiazole + 4-amino-2-methyl-5-(diphosphooxymethyl)pyrimidine + H(+) = thiamine phosphate + diphosphate. It functions in the pathway cofactor biosynthesis; thiamine diphosphate biosynthesis; thiamine phosphate from 4-amino-2-methyl-5-diphosphomethylpyrimidine and 4-methyl-5-(2-phosphoethyl)-thiazole: step 1/1. In terms of biological role, condenses 4-methyl-5-(beta-hydroxyethyl)thiazole monophosphate (THZ-P) and 2-methyl-4-amino-5-hydroxymethyl pyrimidine pyrophosphate (HMP-PP) to form thiamine monophosphate (TMP). The sequence is that of Thiamine-phosphate synthase from Histophilus somni (strain 129Pt) (Haemophilus somnus).